The sequence spans 373 residues: Cyclin-A3-1 (373 aa).

The tract at residues 50–80 (AVVLKPQPAPRGGKRAASHAAEPKKPAPPPA) is disordered.

Belongs to the cyclin family. Cyclin AB subfamily.

The chain is Cyclin-A3-1 (CYCA3-1) from Oryza sativa subsp. japonica (Rice).